A 428-amino-acid polypeptide reads, in one-letter code: Endoplasmic reticulum junction formation protein lunapark (428 aa).

G2 carries the N-myristoyl glycine lipid modification. The Cytoplasmic portion of the chain corresponds to 2-45; that stretch reads GGLFSRWRTKPSTVEVLESIDKEIQALEEFREKNQRLQKLWVGR. The stretch at 16-41 forms a coiled coil; sequence EVLESIDKEIQALEEFREKNQRLQKL. A helical transmembrane segment spans residues 46–66; the sequence is LILYSSVLYLFTCLIVYLWYL. Residues 67-77 are Lumenal-facing; it reads PDEFTARLAMT. Residues 78–98 traverse the membrane as a helical segment; sequence LPFFAFPLIIWSIRTVIIFFF. The Cytoplasmic portion of the chain corresponds to 99–428; sequence SKRTERNNEA…ELSGESLTAE (330 aa). A coiled-coil region spans residues 102 to 128; the sequence is TERNNEALDDLKSQRKKILEEVMEKET. A phosphoserine mark is found at S114, S153, S177, S182, and S194. The disordered stretch occupies residues 143-247; the sequence is SKKAKECEPP…HPPGPPLARP (105 aa). Residues 185 to 198 show a composition bias toward pro residues; the sequence is QGPPPQVPVSPGPP. 2 positions are modified to phosphothreonine: T211 and T213. Phosphoserine is present on residues S217 and S227. Residues 276 to 301 form a C4-type; plays a role in ER morphology zinc finger; sequence CQQCFSHNGMALKEEFEYIAFRCAYC. Phosphoserine occurs at positions 321, 353, and 384. The interval 356 to 428 is disordered; sequence HDVLDDNTEQ…ELSGESLTAE (73 aa). The span at 386-401 shows a compositional bias: acidic residues; sequence SEEPEEKQETENEEAS. S414 is modified (phosphoserine).

The protein belongs to the lunapark family. As to quaternary structure, homodimer; homodimerization requires the C4-type zinc finger motif and decreases during mitosis in a phosphorylation-dependent manner. Myristoylated; myristoylation is necessary for the endoplasmic reticulum (ER) three-way ER tubular junction formation, but is not required neither for membrane translocation, membrane topology formation, nor for the specific localization to ER membranes. Post-translationally, phosphorylated. Phosphorylation occurs at Ser-177, Ser-182, Ser-217, Ser-227, Ser-321 and Ser-384 during interphase. Phosphorylation occurs at Ser-114, Ser-153, Ser-194, Thr-211 and Ser-353 during mitosis; these phosphorylations reduce both its homodimerization and the ER three-way tubular junction formation. In terms of processing, subject to proteasomal degradation following phosphorylation during mitosis. In terms of tissue distribution, expressed in neural precursor cells, where it is detected at the growth-cone-like structure and branching sites of neurite-like processes.

Its subcellular location is the endoplasmic reticulum membrane. Endoplasmic reticulum (ER)-shaping membrane protein that plays a role in determining ER morphology. Involved in the stabilization of nascent three-way ER tubular junctions within the ER network. May also play a role as a curvature-stabilizing protein within the three-way ER tubular junction network. May be involved in limb development. Is involved in central nervous system development. In Homo sapiens (Human), this protein is Endoplasmic reticulum junction formation protein lunapark.